The following is a 3530-amino-acid chain: Unconventional myosin-XV (3530 aa).

Disordered stretches follow at residues 1–46, 615–710, and 730–1057; these read MAKE…RTPK, AGMD…PAHV, and EVPP…QKTL. Pro residues predominate over residues 663–681; the sequence is PPVPPRPPSSGPPPAPPLS. Composition is skewed to low complexity over residues 682–693, 753–763, and 823–835; these read PALSGLPRPASP, AAFGFPGASPR, and SPAP…RLGP. The span at 836 to 850 shows a compositional bias: pro residues; the sequence is PGSPLPGSPRPPSPP. A compositionally biased stretch (low complexity) spans 859-869; it reads RSSLNLPSRLP. Residues 903-913 show a composition bias toward basic and acidic residues; that stretch reads PLEHRESPREP. A compositionally biased stretch (pro residues) spans 1027–1038; the sequence is TKPPTPAPPKDV. The Myosin motor domain maps to 1222 to 1899; sequence DGVEDMTQLE…LYQLLESMRE (678 aa). Residue 1315 to 1322 participates in ATP binding; the sequence is GESGSGKT. The stretch at 1323 to 1350 forms a coiled coil; the sequence is EATKLILRYLAAMNQKREVMQQIKILEA. The interval 1792–1799 is actin-binding; sequence FMRCLKPN. The neck or regulatory domain stretch occupies residues 1888 to 2029; the sequence is EHLYQLLESM…AQVPQVAPVR (142 aa). IQ domains follow at residues 1902–1924, 1925–1954, and 1955–1976; these read LNLA…RFRS, LRHK…SLVK, and FRSL…AEWR. Positions 2030–3530 are tail; sequence TPRLQAEPRV…TLPPSEITLL (1501 aa). The MyTH4 1 domain maps to 2065-2217; it reads MLTVPLRTPL…PTQLEWTATY (153 aa). Disordered stretches follow at residues 2311-2381, 2414-2446, 2490-2509, and 2644-2665; these read AASR…GEPA, YRMK…IPGL, AEKP…GPPA, and TSAP…LEPP. Polar residues predominate over residues 2349–2371; the sequence is GYSSHNQDGTNGETEAQRGTATH. The span at 2417 to 2427 shows a compositional bias: gly residues; the sequence is KGGGQPGGGSS. In terms of domain architecture, SH3 spans 2867-2953; that stretch reads KDSDYVVAVR…PSELVQPAAA (87 aa). In terms of domain architecture, MyTH4 2 spans 3050-3204; sequence FTKTPLQESL…PSSIELRAML (155 aa). The 322-residue stretch at 3209–3530 folds into the FERM domain; that stretch reads SKRQLFLLPG…TLPPSEITLL (322 aa).

This sequence belongs to the TRAFAC class myosin-kinesin ATPase superfamily. Myosin family. As to quaternary structure, interacts with the third PDZ domain of WHRN which is necessary for localization of WHRN to stereocilium tips. Interacts with EPS8. Interacts with FASLG. In terms of tissue distribution, highly expressed in pituitary. Also expressed at lower levels in adult brain, kidney, liver, lung, pancreas, placenta and skeletal muscle. Not expressed in brain. In the pituitary, highly expressed in anterior gland cells.

It is found in the cell projection. The protein resides in the stereocilium. Its subcellular location is the cytoplasm. The protein localises to the cytoskeleton. Myosins are actin-based motor molecules with ATPase activity. Unconventional myosins serve in intracellular movements. Their highly divergent tails are presumed to bind to membranous compartments, which would be moved relative to actin filaments. Required for the arrangement of stereocilia in mature hair bundles. In Homo sapiens (Human), this protein is Unconventional myosin-XV (MYO15A).